A 324-amino-acid polypeptide reads, in one-letter code: NADH-ubiquinone oxidoreductase chain 1 (324 aa).

8 helical membrane passes run 9-29, 75-95, 106-126, 146-166, 178-198, 212-232, 259-279, and 299-319; these read LINP…LTLV, ILFL…WAPM, LGIL…LGSG, ISYE…SGGY, TWLL…TLAE, ELVS…FFLA, ELMT…FLWM, and FLPI…ALAG.

It belongs to the complex I subunit 1 family. As to quaternary structure, core subunit of respiratory chain NADH dehydrogenase (Complex I) which is composed of 45 different subunits.

The protein localises to the mitochondrion inner membrane. The catalysed reaction is a ubiquinone + NADH + 5 H(+)(in) = a ubiquinol + NAD(+) + 4 H(+)(out). In terms of biological role, core subunit of the mitochondrial membrane respiratory chain NADH dehydrogenase (Complex I) which catalyzes electron transfer from NADH through the respiratory chain, using ubiquinone as an electron acceptor. Essential for the catalytic activity and assembly of complex I. This Danio rerio (Zebrafish) protein is NADH-ubiquinone oxidoreductase chain 1 (mt-nd1).